The chain runs to 504 residues: Glycerol kinase (504 aa).

Residue threonine 14 coordinates ADP. Residues threonine 14, threonine 15, and serine 16 each coordinate ATP. Position 14 (threonine 14) interacts with sn-glycerol 3-phosphate. An ADP-binding site is contributed by arginine 18. Arginine 84, glutamate 85, tyrosine 136, and aspartate 246 together coordinate sn-glycerol 3-phosphate. Glycerol-binding residues include arginine 84, glutamate 85, tyrosine 136, aspartate 246, and glutamine 247. ADP contacts are provided by threonine 268 and glycine 311. ATP contacts are provided by threonine 268, glycine 311, glutamine 315, and glycine 412. Residues glycine 412 and asparagine 416 each coordinate ADP.

It belongs to the FGGY kinase family.

It carries out the reaction glycerol + ATP = sn-glycerol 3-phosphate + ADP + H(+). It participates in polyol metabolism; glycerol degradation via glycerol kinase pathway; sn-glycerol 3-phosphate from glycerol: step 1/1. Its activity is regulated as follows. Inhibited by fructose 1,6-bisphosphate (FBP). Its function is as follows. Key enzyme in the regulation of glycerol uptake and metabolism. Catalyzes the phosphorylation of glycerol to yield sn-glycerol 3-phosphate. The protein is Glycerol kinase of Aliivibrio fischeri (strain MJ11) (Vibrio fischeri).